The sequence spans 147 residues: MKLHELKPAKGAVKEVKRKGRGRATGNGKTAGRGHNGQNSRSGGGVRIGFEGGQMPLARRLPKRGFTNIFAKVYNEVNVDVLNKFEDGTTITPEFLKEMGVIKQIEKNGVKILGNGNLEKNLTIKAQKFTKSAAEKIEAAGGKAEVI.

The segment covering 1–15 has biased composition (basic and acidic residues); the sequence is MKLHELKPAKGAVKE. The segment at 1-47 is disordered; it reads MKLHELKPAKGAVKEVKRKGRGRATGNGKTAGRGHNGQNSRSGGGVR. The span at 23–35 shows a compositional bias: gly residues; that stretch reads RATGNGKTAGRGH.

It belongs to the universal ribosomal protein uL15 family. As to quaternary structure, part of the 50S ribosomal subunit.

In terms of biological role, binds to the 23S rRNA. The sequence is that of Large ribosomal subunit protein uL15 from Alkaliphilus metalliredigens (strain QYMF).